Reading from the N-terminus, the 386-residue chain is 2-isopropylmalate synthase (386 aa).

Residues 15-269 (IRIFDTTLRD…ETNVKTWKLY (255 aa)) enclose the Pyruvate carboxyltransferase domain. Positions 24, 207, 209, and 243 each coordinate a divalent metal cation.

This sequence belongs to the alpha-IPM synthase/homocitrate synthase family. As to quaternary structure, homodimer. A divalent metal cation is required as a cofactor.

It carries out the reaction 3-methyl-2-oxobutanoate + acetyl-CoA + H2O = (2S)-2-isopropylmalate + CoA + H(+). It functions in the pathway amino-acid biosynthesis; L-leucine biosynthesis; L-leucine from 3-methyl-2-oxobutanoate: step 1/4. Catalyzes the condensation of the acetyl group of acetyl-CoA with 3-methyl-2-oxobutanoate (2-oxoisovalerate) to form 3-carboxy-3-hydroxy-4-methylpentanoate (2-isopropylmalate). Carries out the first step of the leucine biosynthesis pathway. This Saccharolobus solfataricus (strain ATCC 35092 / DSM 1617 / JCM 11322 / P2) (Sulfolobus solfataricus) protein is 2-isopropylmalate synthase (leuA).